Reading from the N-terminus, the 262-residue chain is UPF0619 GPI-anchored membrane protein C1322.10 (262 aa).

The N-terminal stretch at 1–20 (MLARVGTTLFFLANALAAYA) is a signal peptide. Disordered regions lie at residues 136–165 (STSA…SSST) and 175–194 (ISSS…SGSI). 2 N-linked (GlcNAc...) asparagine glycosylation sites follow: N207 and N227. N242 is lipidated: GPI-like-anchor amidated asparagine. The propeptide at 243–262 (GVAQLSVAACMGIAALMLIA) is removed in mature form.

The protein belongs to the UPF0619 family.

It localises to the golgi apparatus membrane. The protein resides in the cell membrane. The sequence is that of UPF0619 GPI-anchored membrane protein C1322.10 from Schizosaccharomyces pombe (strain 972 / ATCC 24843) (Fission yeast).